Reading from the N-terminus, the 504-residue chain is Anaerobic nitric oxide reductase transcription regulator NorR (504 aa).

Aspartate 57 carries the post-translational modification 4-aspartylphosphate. The region spanning 187–416 (MIGLSPGMTQ…LEHAIHRAVV (230 aa)) is the Sigma-54 factor interaction domain. Residues 215–222 (GETGTGKE) and 278–287 (ADNGTLFLDE) each bind ATP. Residues 479–498 (WAACARMLETDVANLHRLAK) constitute a DNA-binding region (H-T-H motif).

The protein operates within nitrogen metabolism; nitric oxide reduction. Required for the expression of anaerobic nitric oxide (NO) reductase, acts as a transcriptional activator for at least the norVW operon. Activation also requires sigma-54. This Escherichia coli (strain 55989 / EAEC) protein is Anaerobic nitric oxide reductase transcription regulator NorR.